A 438-amino-acid chain; its full sequence is MAELISREGNKVEFKVAVPAAEVNRAYEQVWAGLARDVRVPGFRPGKAPRKVIEGRVGKGYVEQEVRDRLLQVHYPQAARELKLSLVDATIDPQDLNNGKDFTFNVRGETYPEVTLGDWSDLKLEATSPEITDDVLNRTLSDLQERNATFESVDRAIEASDQVTIEEQGEDGGTYPVYLDVAEAHVRDALLGKNKGDTVEITVPAHQHGDHEHAEHTVTVKIMDVKTKQLQELNDEFASSLNFESLDRLRADLRNELQRRAQQEGDNARREEFVAHLTERMQADIPQALLERRREAMMQEIQDDLSRQGVKWSEYETFMKEQGKLDEFMADLSKNAETRVKRDLALEKLAEDLKVQVSDAEFNQTMTMLAQANGLSPEQLSKQLGPNGINSYYASIVRERALQQALAQLSGPQAETVAADQGEQQAEGQEESAEKSEE.

The PPIase FKBP-type domain maps to 160 to 231; that stretch reads SDQVTIEEQG…IMDVKTKQLQ (72 aa). A disordered region spans residues 407 to 438; the sequence is AQLSGPQAETVAADQGEQQAEGQEESAEKSEE. A compositionally biased stretch (low complexity) spans 418–427; the sequence is AADQGEQQAE.

The protein belongs to the FKBP-type PPIase family. Tig subfamily.

The protein localises to the cytoplasm. The enzyme catalyses [protein]-peptidylproline (omega=180) = [protein]-peptidylproline (omega=0). Functionally, involved in protein export. Acts as a chaperone by maintaining the newly synthesized protein in an open conformation. Functions as a peptidyl-prolyl cis-trans isomerase. This is Trigger factor from Deinococcus deserti (strain DSM 17065 / CIP 109153 / LMG 22923 / VCD115).